An 81-amino-acid polypeptide reads, in one-letter code: Ferredoxin (81 aa).

The 4Fe-4S ferredoxin-type domain occupies 2–30; that stretch reads KYTIVDKETCIACGACGAAAPDIYDYDED. Cys-11, Cys-14, Cys-17, and Cys-61 together coordinate [4Fe-4S] cluster.

It depends on [4Fe-4S] cluster as a cofactor.

In terms of biological role, ferredoxins are iron-sulfur proteins that transfer electrons in a wide variety of metabolic reactions. This is Ferredoxin (fer) from Geobacillus stearothermophilus (Bacillus stearothermophilus).